A 241-amino-acid chain; its full sequence is Interleukin-6 (241 aa).

An N-terminal signal peptide occupies residues 1-26 (MNSFTSALRPGPLGCSLALLLVVATA). The interval 32–51 (PVREDSNTKASPDKTLTPPG) is disordered. Disulfide bonds link C72/C78 and C101/C111. The N-linked (GlcNAc...) asparagine glycan is linked to N108.

It belongs to the IL-6 superfamily. As to quaternary structure, component of a hexamer of two molecules each of IL6, IL6R and IL6ST; first binds to IL6R to associate with the signaling subunit IL6ST. Interacts with IL6R (via the N-terminal ectodomain); this interaction may be affected by IL6R-binding with SORL1, hence decreasing IL6 cis signaling. Interacts with SORL1 (via the N-terminal ectodomain); this interaction leads to IL6 internalization and lysosomal degradation. May form a trimeric complex with the soluble SORL1 ectodomain and soluble IL6R receptor; this interaction might stabilize circulating IL6, hence promoting IL6 trans signaling.

It is found in the secreted. In terms of biological role, cytokine with a wide variety of biological functions in immunity, tissue regeneration, and metabolism. Binds to IL6R, then the complex associates to the signaling subunit IL6ST/gp130 to trigger the intracellular IL6-signaling pathway. The interaction with the membrane-bound IL6R and IL6ST stimulates 'classic signaling', whereas the binding of IL6 and soluble IL6R to IL6ST stimulates 'trans-signaling'. Alternatively, 'cluster signaling' occurs when membrane-bound IL6:IL6R complexes on transmitter cells activate IL6ST receptors on neighboring receiver cells. Functionally, IL6 is a potent inducer of the acute phase response. Rapid production of IL6 contributes to host defense during infection and tissue injury, but excessive IL6 synthesis is involved in disease pathology. In the innate immune response, is synthesized by myeloid cells, such as macrophages and dendritic cells, upon recognition of pathogens through toll-like receptors (TLRs) at the site of infection or tissue injury. In the adaptive immune response, is required for the differentiation of B cells into immunoglobulin-secreting cells. Plays a major role in the differentiation of CD4(+) T cell subsets. Essential factor for the development of T follicular helper (Tfh) cells that are required for the induction of germinal-center formation. Required to drive naive CD4(+) T cells to the Th17 lineage. Also required for proliferation of myeloma cells and the survival of plasmablast cells. Acts as an essential factor in bone homeostasis and on vessels directly or indirectly by induction of VEGF, resulting in increased angiogenesis activity and vascular permeability. Induces, through 'trans-signaling' and synergistically with IL1B and TNF, the production of VEGF. Involved in metabolic controls, is discharged into the bloodstream after muscle contraction increasing lipolysis and improving insulin resistance. 'Trans-signaling' in central nervous system also regulates energy and glucose homeostasis. Mediates, through GLP-1, crosstalk between insulin-sensitive tissues, intestinal L cells and pancreatic islets to adapt to changes in insulin demand. Also acts as a myokine. Plays a protective role during liver injury, being required for maintenance of tissue regeneration. Also has a pivotal role in iron metabolism by regulating HAMP/hepcidin expression upon inflammation or bacterial infection. Through activation of IL6ST-YAP-NOTCH pathway, induces inflammation-induced epithelial regeneration. The chain is Interleukin-6 (IL6) from Oryctolagus cuniculus (Rabbit).